Reading from the N-terminus, the 336-residue chain is Acetyl-coenzyme A carboxylase carboxyl transferase subunit beta (336 aa).

A CoA carboxyltransferase N-terminal domain is found at 27–297; that stretch reads LWTKCESCQG…VAPAPAPAAT (271 aa). Residues Cys-31, Cys-34, Cys-50, and Cys-53 each contribute to the Zn(2+) site. Residues 31 to 53 form a C4-type zinc finger; that stretch reads CESCQGILYRPDLERNLEVCPKC. Residues 287–336 form a disordered region; sequence SVAPAPAPAATVDPEPESAEPEAPAEEAGPAGAAGDQAGESQDEGDPRNA. A compositionally biased stretch (acidic residues) spans 300-311; the sequence is PEPESAEPEAPA. Over residues 312 to 326 the composition is skewed to low complexity; the sequence is EEAGPAGAAGDQAGE.

The protein belongs to the AccD/PCCB family. Acetyl-CoA carboxylase is a heterohexamer composed of biotin carboxyl carrier protein (AccB), biotin carboxylase (AccC) and two subunits each of ACCase subunit alpha (AccA) and ACCase subunit beta (AccD). Zn(2+) serves as cofactor.

The protein localises to the cytoplasm. It carries out the reaction N(6)-carboxybiotinyl-L-lysyl-[protein] + acetyl-CoA = N(6)-biotinyl-L-lysyl-[protein] + malonyl-CoA. It participates in lipid metabolism; malonyl-CoA biosynthesis; malonyl-CoA from acetyl-CoA: step 1/1. Component of the acetyl coenzyme A carboxylase (ACC) complex. Biotin carboxylase (BC) catalyzes the carboxylation of biotin on its carrier protein (BCCP) and then the CO(2) group is transferred by the transcarboxylase to acetyl-CoA to form malonyl-CoA. This chain is Acetyl-coenzyme A carboxylase carboxyl transferase subunit beta, found in Halorhodospira halophila (strain DSM 244 / SL1) (Ectothiorhodospira halophila (strain DSM 244 / SL1)).